The sequence spans 580 residues: MIKPTFLRRVAIAALLSGSCFSAAAAPPAPPVSYGVEEDVFHPVRAKQGMVASVDATATQVGVDILKEGGNAVDAAVAVGYALAVTHPQAGNLGGGGFMLIRSKNGNTTAIDFREMAPAKATRDMFLDDQGNPDSKKSLTSHLASGTPGTVAGFSLALDKYGTMPLNKVVQPAFKLARDGFIVNDALADDLKTYGSEVLPNHENSKAIFWKEGEPLKKGDTLVQANLAKSLEMIAENGPDEFYKGTIAEQIAQEMQKNGGLITKEDLAAYKAVERTPISGDYRGYQVYSMPPPSSGGIHIVQILNILENFDMKKYGFGSADAMQIMAEAEKYAYADRSEYLGDPDFVKVPWQALTNKAYAKSIADQIDINKAKPSSEIRPGKLAPYESNQTTHYSVVDKDGNAVAVTYTLNTTFGTGIVAGESGILLNNQMDDFSAKPGVPNVYGLVGGDANAVGPNKRPLSSMSPTIVVKDGKTWLVTGSPGGSRIITTVLQMVVNSIDYGLNVAEATNAPRFHHQWLPDELRVEKGFSPDTLKLLEAKGQKVALKEAMGSTQSIMVGPDGELYGASDPRSVDDLTAGY.

A signal peptide spans 1–25 (MIKPTFLRRVAIAALLSGSCFSAAA). L-glutamate is bound at residue arginine 114. Threonine 391 functions as the Nucleophile in the catalytic mechanism. Residues threonine 409, asparagine 411, glutamine 430, aspartate 433, 462–463 (SS), and 483–484 (GG) contribute to the L-glutamate site. The interval 561 to 580 (DGELYGASDPRSVDDLTAGY) is disordered.

Belongs to the gamma-glutamyltransferase family. This enzyme consists of two polypeptide chains, which are synthesized in precursor form from a single polypeptide. In terms of processing, cleaved by autocatalysis into a large and a small subunit.

The protein resides in the periplasm. It catalyses the reaction an N-terminal (5-L-glutamyl)-[peptide] + an alpha-amino acid = 5-L-glutamyl amino acid + an N-terminal L-alpha-aminoacyl-[peptide]. The catalysed reaction is glutathione + H2O = L-cysteinylglycine + L-glutamate. The enzyme catalyses an S-substituted glutathione + H2O = an S-substituted L-cysteinylglycine + L-glutamate. It participates in sulfur metabolism; glutathione metabolism. With respect to regulation, transferase and hydrolase activities are inhibited by L-Ala and L-Gln, and also by GGT affinity labeling reagents such as azaserine and 6-diazo-5-oxo-nor-leucine. Cleaves the gamma-glutamyl bond of periplasmic glutathione (gamma-Glu-Cys-Gly), glutathione conjugates, and other gamma-glutamyl compounds. The metabolism of glutathione releases free glutamate and the dipeptide cysteinyl-glycine, which is hydrolyzed to cysteine and glycine by dipeptidases; it may function in amino acid uptake/salvage, or possibly in peptidoglycan linkage. Catalyzes the hydrolysis and transpeptidation of many gamma-glutamyl compounds (including some D-gamma-glutamyl substrates), with a preference for basic and aromatic amino acids as acceptors. The KM values for gamma-glutamyl acceptors are so high that it has been proposed transpeptidation is not the physiological role in E.coli. In Escherichia coli (strain K12), this protein is Glutathione hydrolase proenzyme (ggt).